A 322-amino-acid chain; its full sequence is Beta-ketoacyl-[acyl-carrier-protein] synthase III (322 aa).

Residues cysteine 113 and histidine 249 contribute to the active site. The segment at 250 to 254 (QANLR) is ACP-binding. The active site involves asparagine 279.

The protein belongs to the thiolase-like superfamily. FabH family. As to quaternary structure, homodimer.

The protein localises to the cytoplasm. It catalyses the reaction malonyl-[ACP] + acetyl-CoA + H(+) = 3-oxobutanoyl-[ACP] + CO2 + CoA. The protein operates within lipid metabolism; fatty acid biosynthesis. Catalyzes the condensation reaction of fatty acid synthesis by the addition to an acyl acceptor of two carbons from malonyl-ACP. Catalyzes the first condensation reaction which initiates fatty acid synthesis and may therefore play a role in governing the total rate of fatty acid production. Possesses both acetoacetyl-ACP synthase and acetyl transacylase activities. Its substrate specificity determines the biosynthesis of branched-chain and/or straight-chain of fatty acids. The polypeptide is Beta-ketoacyl-[acyl-carrier-protein] synthase III (Granulibacter bethesdensis (strain ATCC BAA-1260 / CGDNIH1)).